The following is a 407-amino-acid chain: Peptide chain release factor subunit 1 (407 aa).

This sequence belongs to the eukaryotic release factor 1 family. Heterodimer of two subunits, one of which binds GTP.

The protein localises to the cytoplasm. Functionally, directs the termination of nascent peptide synthesis (translation) in response to the termination codons UAA, UAG and UGA. In Archaeoglobus fulgidus (strain ATCC 49558 / DSM 4304 / JCM 9628 / NBRC 100126 / VC-16), this protein is Peptide chain release factor subunit 1 (prf1).